A 453-amino-acid polypeptide reads, in one-letter code: tRNA modification GTPase MnmE (453 aa).

(6S)-5-formyl-5,6,7,8-tetrahydrofolate is bound by residues arginine 28, glutamate 86, and lysine 125. The TrmE-type G domain maps to 221 to 375 (GIKIAIVGEP…LIKYLEETSL (155 aa)). Asparagine 231 contacts K(+). GTP-binding positions include 231 to 236 (NAGKSS), 250 to 256 (TNIPGTT), and 276 to 279 (DTAG). Serine 235 lines the Mg(2+) pocket. Residues threonine 250, isoleucine 252, and threonine 255 each coordinate K(+). Threonine 256 contacts Mg(2+). Lysine 453 lines the (6S)-5-formyl-5,6,7,8-tetrahydrofolate pocket.

This sequence belongs to the TRAFAC class TrmE-Era-EngA-EngB-Septin-like GTPase superfamily. TrmE GTPase family. Homodimer. Heterotetramer of two MnmE and two MnmG subunits. It depends on K(+) as a cofactor.

The protein localises to the cytoplasm. Functionally, exhibits a very high intrinsic GTPase hydrolysis rate. Involved in the addition of a carboxymethylaminomethyl (cmnm) group at the wobble position (U34) of certain tRNAs, forming tRNA-cmnm(5)s(2)U34. The sequence is that of tRNA modification GTPase MnmE from Mycoplasmoides gallisepticum (strain R(low / passage 15 / clone 2)) (Mycoplasma gallisepticum).